The chain runs to 224 residues: Thymidylate kinase (224 aa).

Residue 7–14 (GIEGSGKS) participates in ATP binding.

This sequence belongs to the thymidylate kinase family.

The enzyme catalyses dTMP + ATP = dTDP + ADP. Functionally, phosphorylation of dTMP to form dTDP in both de novo and salvage pathways of dTTP synthesis. This Nitratidesulfovibrio vulgaris (strain DP4) (Desulfovibrio vulgaris) protein is Thymidylate kinase.